Here is a 245-residue protein sequence, read N- to C-terminus: Adapter protein MecA (245 aa).

Belongs to the MecA family. As to quaternary structure, homodimer.

In terms of biological role, enables the recognition and targeting of unfolded and aggregated proteins to the ClpC protease or to other proteins involved in proteolysis. The sequence is that of Adapter protein MecA from Streptococcus pneumoniae serotype 19F (strain G54).